Here is a 462-residue protein sequence, read N- to C-terminus: Glutamate--tRNA ligase 1 (462 aa).

The short motif at 8–18 (PSPTGYLHIGG) is the 'HIGH' region element. The short motif at 237–241 (KLSKR) is the 'KMSKS' region element. Residue Lys-240 coordinates ATP.

It belongs to the class-I aminoacyl-tRNA synthetase family. Glutamate--tRNA ligase type 1 subfamily. Monomer.

The protein localises to the cytoplasm. It carries out the reaction tRNA(Glu) + L-glutamate + ATP = L-glutamyl-tRNA(Glu) + AMP + diphosphate. In terms of biological role, catalyzes the attachment of glutamate to tRNA(Glu) in a two-step reaction: glutamate is first activated by ATP to form Glu-AMP and then transferred to the acceptor end of tRNA(Glu). The sequence is that of Glutamate--tRNA ligase 1 from Sulfurimonas denitrificans (strain ATCC 33889 / DSM 1251) (Thiomicrospira denitrificans (strain ATCC 33889 / DSM 1251)).